Here is a 156-residue protein sequence, read N- to C-terminus: MNVIEGVVATPNARVAIAIARFNNFINDSLLEGAIDALKRIGQVTDDNITVVWVPGAYELPLVANVLAKTNRYDAVIALGTVIRGGTAHFEYVAGEASSGLSSVAMNSDIPVAFGVLTTESIEQAIERAGTKAGNKGAEAALTALEMINVIKAIKG.

5-amino-6-(D-ribitylamino)uracil is bound by residues F22, A57–E59, and T81–I83. A (2S)-2-hydroxy-3-oxobutyl phosphate-binding site is contributed by G86 to T87. The Proton donor role is filled by H89. F114 is a 5-amino-6-(D-ribitylamino)uracil binding site. Residue R128 participates in (2S)-2-hydroxy-3-oxobutyl phosphate binding.

Belongs to the DMRL synthase family. As to quaternary structure, forms an icosahedral capsid composed of 60 subunits, arranged as a dodecamer of pentamers.

The catalysed reaction is (2S)-2-hydroxy-3-oxobutyl phosphate + 5-amino-6-(D-ribitylamino)uracil = 6,7-dimethyl-8-(1-D-ribityl)lumazine + phosphate + 2 H2O + H(+). It participates in cofactor biosynthesis; riboflavin biosynthesis; riboflavin from 2-hydroxy-3-oxobutyl phosphate and 5-amino-6-(D-ribitylamino)uracil: step 1/2. Catalyzes the formation of 6,7-dimethyl-8-ribityllumazine by condensation of 5-amino-6-(D-ribitylamino)uracil with 3,4-dihydroxy-2-butanone 4-phosphate. This is the penultimate step in the biosynthesis of riboflavin. The sequence is that of 6,7-dimethyl-8-ribityllumazine synthase from Yersinia enterocolitica serotype O:8 / biotype 1B (strain NCTC 13174 / 8081).